We begin with the raw amino-acid sequence, 501 residues long: Glycosyltransferase family 92 protein F13G3.3 (501 aa).

The chain crosses the membrane as a helical span at residues 10 to 30 (LSVVLLFSFLFFVTAVLLQFI). Residues 151–439 (KPVVMCISPL…ISDCYKQSYY (289 aa)) form the GT92 domain.

This sequence belongs to the glycosyltransferase 92 family.

The protein resides in the membrane. This is Glycosyltransferase family 92 protein F13G3.3 from Caenorhabditis elegans.